The primary structure comprises 58 residues: UPF0391 membrane protein Shew185_1413 (58 aa).

The next 2 helical transmembrane spans lie at 6 to 26 and 28 to 48; these read LVFLVVAVIAGLFGFTGIAGA and AGIAKIIFFLFIVLLVISLLI.

Belongs to the UPF0391 family.

The protein resides in the cell membrane. The chain is UPF0391 membrane protein Shew185_1413 from Shewanella baltica (strain OS185).